Consider the following 163-residue polypeptide: Phosphopantetheine adenylyltransferase (163 aa).

Thr11 provides a ligand contact to substrate. ATP-binding positions include 11–12 (TF) and His19. Substrate contacts are provided by Lys43, Leu75, and Arg89. ATP contacts are provided by residues 90–92 (GLR), Glu100, and 125–131 (YMFISAT).

Belongs to the bacterial CoaD family. As to quaternary structure, homohexamer. Mg(2+) serves as cofactor.

The protein localises to the cytoplasm. It carries out the reaction (R)-4'-phosphopantetheine + ATP + H(+) = 3'-dephospho-CoA + diphosphate. Its pathway is cofactor biosynthesis; coenzyme A biosynthesis; CoA from (R)-pantothenate: step 4/5. Its function is as follows. Reversibly transfers an adenylyl group from ATP to 4'-phosphopantetheine, yielding dephospho-CoA (dPCoA) and pyrophosphate. The sequence is that of Phosphopantetheine adenylyltransferase from Aromatoleum aromaticum (strain DSM 19018 / LMG 30748 / EbN1) (Azoarcus sp. (strain EbN1)).